We begin with the raw amino-acid sequence, 843 residues long: MGFLSKILDGNNKEIKQLGKLADKVIALEEKTAILTDEEIRNKTKQFQTELADIDNVKKQNDYLDKILPEAYALVREGSKRVFNMTPYKVQIMGGIAIHKGDIAEMRTGEGKTLTATMPTYLNALAGRGVHVITVNEYLSSVQSEEMAELYNFLGLTVGLNLNSKTTEEKREAYAQDITYSTNNELGFDYLRDNMVNYSEDRVMRPLHFAIIDEVDSILIDEARTPLIISGEAEKSTSLYTQANVFAKMLKQDEDYKYDEKTKAVHLTEQGADKAERMFKVENLYDVQNVDVISHINTALRAHVTLQRDVDYMVVDGEVLIVDQFTGRTMPGRRFSEGLHQAIEAKEGVQIQNESKTMASITFQNYFRMYNKLAGMTGTAKTEEEEFRNIYNMTVTQIPTNKPVQRNDKSDLIYISQKGKFDAVVEDVVEKHKAGQPVLLGTVAVETSEYISNLLKKRGIRHDVLNAKNHEREAEIVAGAGQKGAVTIATNMAGRGTDIKLGEGVEELGGLAVIGTERHESRRIDDQLRGRSGRQGDKGDSRFYLSLQDELMIRFGSERLQKMMSRLGLDDSTPIESKMVSRAVESAQKRVEGNNFDARKRILEYDEVLRKQREIIYNERNSIIDEEDSSQVVDAMLRSTLQRSINYYINTADDEPEYQPFIDYINDIFLQEGDITEDDIKGKDAEDIFEVVWAKIEAAYQSQKDILEEQMNEFERMILLRSIDSHWTDHIDTMDQLRQGIHLRSYAQQNPLRDYQNEGHELFDIMMQNIEEDTCKFILKSVVQVEDNIEREKTTEFGEAKHVSAEDGKEKVKPKPIVKGDQVGRNDDCPCGSGKKFKNCHGK.

Residues Gln91, 109–113, and Asp498 each bind ATP; that span reads GEGKT. A compositionally biased stretch (basic and acidic residues) spans 799–813; that stretch reads EAKHVSAEDGKEKVK. The segment at 799 to 826 is disordered; it reads EAKHVSAEDGKEKVKPKPIVKGDQVGRN. 4 residues coordinate Zn(2+): Cys829, Cys831, Cys840, and His841.

It belongs to the SecA family. As to quaternary structure, monomer and homodimer. Part of the essential Sec protein translocation apparatus which comprises SecA, SecYEG and auxiliary proteins SecDF. Other proteins may also be involved. The cofactor is Zn(2+).

Its subcellular location is the cell membrane. The protein resides in the cytoplasm. It carries out the reaction ATP + H2O + cellular proteinSide 1 = ADP + phosphate + cellular proteinSide 2.. Part of the Sec protein translocase complex. Interacts with the SecYEG preprotein conducting channel. Has a central role in coupling the hydrolysis of ATP to the transfer of proteins into and across the cell membrane, serving as an ATP-driven molecular motor driving the stepwise translocation of polypeptide chains across the membrane. The chain is Protein translocase subunit SecA 1 from Staphylococcus aureus (strain N315).